We begin with the raw amino-acid sequence, 86 residues long: Small ribosomal subunit protein uS15c (86 aa).

This sequence belongs to the universal ribosomal protein uS15 family. In terms of assembly, part of the 30S ribosomal subunit.

It localises to the plastid. The protein localises to the chloroplast. The sequence is that of Small ribosomal subunit protein uS15c (rps15) from Cryptomeria japonica (Japanese cedar).